Consider the following 437-residue polypeptide: Chaperone SurA (437 aa).

An N-terminal signal peptide occupies residues 1–22 (MKNWKFPLISTLLLLLTINVHA). 2 consecutive PpiC domains span residues 173–274 (TVQY…KIDD) and 283–383 (VTEV…EVLE).

The protein localises to the periplasm. It catalyses the reaction [protein]-peptidylproline (omega=180) = [protein]-peptidylproline (omega=0). In terms of biological role, chaperone involved in the correct folding and assembly of outer membrane proteins. Recognizes specific patterns of aromatic residues and the orientation of their side chains, which are found more frequently in integral outer membrane proteins. May act in both early periplasmic and late outer membrane-associated steps of protein maturation. The polypeptide is Chaperone SurA (Aliivibrio fischeri (strain ATCC 700601 / ES114) (Vibrio fischeri)).